We begin with the raw amino-acid sequence, 110 residues long: Large ribosomal subunit protein uL24 (110 aa).

The protein belongs to the universal ribosomal protein uL24 family. Part of the 50S ribosomal subunit.

One of two assembly initiator proteins, it binds directly to the 5'-end of the 23S rRNA, where it nucleates assembly of the 50S subunit. Its function is as follows. One of the proteins that surrounds the polypeptide exit tunnel on the outside of the subunit. The polypeptide is Large ribosomal subunit protein uL24 (Thermus thermophilus (strain ATCC BAA-163 / DSM 7039 / HB27)).